A 178-amino-acid chain; its full sequence is Large ribosomal subunit protein uL6 (178 aa).

This sequence belongs to the universal ribosomal protein uL6 family. In terms of assembly, part of the 50S ribosomal subunit.

Its function is as follows. This protein binds to the 23S rRNA, and is important in its secondary structure. It is located near the subunit interface in the base of the L7/L12 stalk, and near the tRNA binding site of the peptidyltransferase center. The sequence is that of Large ribosomal subunit protein uL6 from Listeria innocua serovar 6a (strain ATCC BAA-680 / CLIP 11262).